A 337-amino-acid polypeptide reads, in one-letter code: 3-isopropylmalate dehydrogenase (337 aa).

Positions 86, 96, 117, and 201 each coordinate substrate. Residues Asp-201, Asp-225, and Asp-229 each coordinate Mg(2+). 258–270 (GAAFDIAGKNIGN) contributes to the NAD(+) binding site.

This sequence belongs to the isocitrate and isopropylmalate dehydrogenases family. As to quaternary structure, homotetramer. The cofactor is Mg(2+). It depends on Mn(2+) as a cofactor.

It localises to the cytoplasm. The enzyme catalyses (2R,3S)-3-isopropylmalate + NAD(+) = 4-methyl-2-oxopentanoate + CO2 + NADH. Its pathway is amino-acid biosynthesis; L-leucine biosynthesis; L-leucine from 3-methyl-2-oxobutanoate: step 3/4. Functionally, catalyzes the oxidation of 3-carboxy-2-hydroxy-4-methylpentanoate (3-isopropylmalate) to 3-carboxy-4-methyl-2-oxopentanoate. The product decarboxylates to 4-methyl-2 oxopentanoate. In Sulfurisphaera tokodaii (strain DSM 16993 / JCM 10545 / NBRC 100140 / 7) (Sulfolobus tokodaii), this protein is 3-isopropylmalate dehydrogenase (leuB).